A 524-amino-acid chain; its full sequence is 12S seed storage protein CRC (524 aa).

Residues 1–23 (MVKLSNLLVATFGVLLVLNGCLA) form the signal peptide. Cysteines 37 and 70 form a disulfide. Cupin type-1 domains lie at 42-289 (LDVL…QLAQ) and 346-495 (ENID…EEAR). Residue serine 53 is modified to Phosphoserine. Tyrosine 78 bears the Phosphotyrosine mark. Serine 97 carries the phosphoserine modification. Cysteine 113 and cysteine 340 form a disulfide bridge. At threonine 116 the chain carries Phosphothreonine. The disordered stretch occupies residues 119-190 (DSQPMQGQQQ…QGQQGQQGFR (72 aa)). Residues 124–188 (QGQQQGQPWQ…EGQGQQGQQG (65 aa)) show a composition bias toward low complexity. Phosphoserine is present on residues serine 259 and serine 366. Threonine 459 bears the Phosphothreonine mark. Serine 484 is modified (phosphoserine). Position 501 is a phosphothreonine (threonine 501).

This sequence belongs to the 11S seed storage protein (globulins) family. As to quaternary structure, hexamer; each subunit is composed of an acidic and a basic chain derived from a single precursor and linked by a disulfide bond. Post-translationally, proteolytically processed during seed maturation at a conserved Asn-Gly peptide bond by an asparaginyl endopeptidase to produce two mature polypeptides referred to as alpha and beta subunits that are joined together by a disulfide bond. Phosphorylated in seeds on some Tyr residues in response to abscisic acid (ABA). In terms of tissue distribution, accumulates in seeds 8 days after anthesis.

Its subcellular location is the protein storage vacuole. Its function is as follows. Seed storage protein. This Arabidopsis thaliana (Mouse-ear cress) protein is 12S seed storage protein CRC (CRC).